The sequence spans 528 residues: MFSLQDLCRKNTFFLPSDFSKHTLHLLGLYWKGHGSIQRIKNDGVLIEHDLLLSINEALILAGEEGNNDVVQLLLLWEGNLHYAIIGALRTEKYGLICEYHSQIQDWHVLLPLIQDPETFEKCHDLSLECDLSCLLQHAVKYNMLSILVKYKEDLLNVLFRQQIQGLFILACENRKLEILTWMGQNLPIPDPEPIFNIAVVTKDLEMFSLGYKIVFEYMENQGLFHLTQVVRMVMINRHFSMVINKGLLPFVLEILKHGGHVNRALSYAVTQNKRKILDHVVRQKNVPHKTIERMLHLAVKKHAPRKTLNLLLSYINYKVKNVKKLLEHVVKYNSTLVIRILLEKKKNLLDATLTRYVKDSTYFRVKEFMQDFSISPEKFIKIAVREQKNVLIKAICEDIWENPAERIRNLKQIVCTIKYESGRQFLINIIHTIYQSYSLKPEEILKLATFYVKHNATTHFKDLCKYLWLNRGTESKKLFLECLEIADKKEFPDIKSIVSEYINYLFTAGAITKEEIMRVYALEYAMY.

ANK repeat units follow at residues 129–158 (ECDLSCLLQHAVKYNMLSILVKYKEDLLNV), 261–290 (HVNRALSYAVTQNKRKILDHVVRQKNVPHK), and 292–322 (IERMLHLAVKKHAPRKTLNLLLSYINYKVKN).

The protein belongs to the asfivirus MGF 505 family. As to quaternary structure, interacts with host STING1. Interacts with host JAK1; this interaction leads to JAK1 degradation. Interacts with host JAK2; this interaction leads to JAK2 degradation. Interacts with host RELA; this interaction inhibits NF-kappa-B promoter activity.

The protein resides in the host cytoplasm. Its function is as follows. Plays a role in virus cell tropism, and may be required for efficient virus replication in macrophages. Interferes with host NF-kappa-B promoter activity mediated by TLR8. Mechanistically, inhibits the phosphorylation and subsequent nuclear translocation of host NF-kappa-B RELA subunit downstream of TLR8. Promotes the expression of the autophagy-related protein host ULK1 to degrade host STING and inhibit the interferon response. Also inhibits JAK1- and JAK2-mediated signaling and thus negatively regulates the IFN-gamma signaling. This Ornithodoros (relapsing fever ticks) protein is Protein MGF 505-7R.